We begin with the raw amino-acid sequence, 441 residues long: Transducin-like enhancer protein 7 (441 aa).

Disordered stretches follow at residues methionine 1–leucine 77 and proline 91–serine 119. Residues glutamate 27–valine 49 show a composition bias toward low complexity. Polar residues predominate over residues proline 62 to histidine 76. The segment covering glycine 108–serine 119 has biased composition (low complexity). 5 WD repeats span residues phenylalanine 156 to lysine 194, histidine 204 to alanine 243, serine 247 to lysine 285, histidine 286 to glutamine 325, and glutamate 409 to tyrosine 441.

This sequence belongs to the WD repeat Groucho/TLE family.

The protein is Transducin-like enhancer protein 7 of Homo sapiens (Human).